The chain runs to 67 residues: Stomoxyn (67 aa).

The N-terminal stretch at 1–24 (MNFYKYLVVLVVLVLCLSATQTEA) is a signal peptide. The residue at position 66 (T66) is a Threonine amide.

As to expression, constitutively expressed in the adult anterior midgut; proventriculus, thoracic and reservoir regions.

The protein resides in the secreted. Has antimicrobial activity against most Gram-positive and Gram-negative bacteria, filamentous fungi and yeasts tested. Has trypanolytic effect on T.b.rhodesiense and limited hemolytic activity against bovine red blood cells. Its function is as follows. May play an important role in protecting the stored blood in the anterior midgut from microorganisms prior to digestion. Adopts an amphipathic alpha-helical structure only in the presence of an organic solvent that mimics a phospholipid membrane. The polypeptide is Stomoxyn (Stomoxys calcitrans (Stable fly)).